Consider the following 99-residue polypeptide: Late cornified envelope protein 4A (99 aa).

The interval 78–99 (CYGSGSGQQSGGSGCCSGGGCC) is disordered. The segment covering 81–99 (SGSGQQSGGSGCCSGGGCC) has biased composition (gly residues).

Belongs to the LCE family. As to quaternary structure, interacts with CYSRT1; the interaction is direct. Skin-specific. Expression was readily detected in adult trunk skin, adult arm skin, fetal skin, penal skin, vulva, esophagus and tongue. Not expressed in the cervix, rectum, lung, colon, or placenta.

Its function is as follows. Precursors of the cornified envelope of the stratum corneum. The chain is Late cornified envelope protein 4A (LCE4A) from Homo sapiens (Human).